A 732-amino-acid polypeptide reads, in one-letter code: Adducin-related protein 1 (732 aa).

2 disordered regions span residues 1 to 22 (MIGRKEKERERPYYRDPDDPEY) and 684 to 732 (TRFS…KKDK). Over residues 685 to 705 (RFSSTQGTSEGNTTSRSCTTA) the composition is skewed to polar residues. Over residues 716–732 (KKKKKKGFLSFMRKKDK) the composition is skewed to basic residues.

It belongs to the aldolase class II family. Adducin subfamily.

It localises to the cytoplasm. The protein resides in the cytoskeleton. It is found in the cell membrane. Functionally, membrane-cytoskeleton-associated protein that promotes the assembly of the spectrin-actin network. Plays a role in time-dependent memmory loss and the retention of conditioned behavior over time. This is Adducin-related protein 1 from Caenorhabditis elegans.